A 642-amino-acid chain; its full sequence is Threonine--tRNA ligase (642 aa).

Residues 1–61 (MPVITLPDGS…ENDATLSIIT (61 aa)) enclose the TGS domain. The catalytic stretch occupies residues 243–534 (DHRKIGKQLD…LTEEFAGFFP (292 aa)). Residues Cys-334, His-385, and His-511 each contribute to the Zn(2+) site.

The protein belongs to the class-II aminoacyl-tRNA synthetase family. As to quaternary structure, homodimer. Requires Zn(2+) as cofactor.

The protein localises to the cytoplasm. It catalyses the reaction tRNA(Thr) + L-threonine + ATP = L-threonyl-tRNA(Thr) + AMP + diphosphate + H(+). Its function is as follows. Catalyzes the attachment of threonine to tRNA(Thr) in a two-step reaction: L-threonine is first activated by ATP to form Thr-AMP and then transferred to the acceptor end of tRNA(Thr). Also edits incorrectly charged L-seryl-tRNA(Thr). The sequence is that of Threonine--tRNA ligase from Salmonella paratyphi A (strain ATCC 9150 / SARB42).